Consider the following 224-residue polypeptide: LexA repressor (224 aa).

Residues 31 to 51 (RAEIATELGFRSANAAEEHLQ) constitute a DNA-binding region (H-T-H motif). Catalysis depends on for autocatalytic cleavage activity residues Ser-142 and Lys-179.

The protein belongs to the peptidase S24 family. As to quaternary structure, homodimer.

It catalyses the reaction Hydrolysis of Ala-|-Gly bond in repressor LexA.. Represses a number of genes involved in the response to DNA damage (SOS response), including recA and lexA. In the presence of single-stranded DNA, RecA interacts with LexA causing an autocatalytic cleavage which disrupts the DNA-binding part of LexA, leading to derepression of the SOS regulon and eventually DNA repair. The chain is LexA repressor from Albidiferax ferrireducens (strain ATCC BAA-621 / DSM 15236 / T118) (Rhodoferax ferrireducens).